We begin with the raw amino-acid sequence, 141 residues long: ATP synthase epsilon chain (141 aa).

This sequence belongs to the ATPase epsilon chain family. As to quaternary structure, F-type ATPases have 2 components, CF(1) - the catalytic core - and CF(0) - the membrane proton channel. CF(1) has five subunits: alpha(3), beta(3), gamma(1), delta(1), epsilon(1). CF(0) has three main subunits: a, b and c.

It is found in the cell inner membrane. Produces ATP from ADP in the presence of a proton gradient across the membrane. This chain is ATP synthase epsilon chain, found in Bordetella petrii (strain ATCC BAA-461 / DSM 12804 / CCUG 43448).